Consider the following 505-residue polypeptide: MASLLHLLLLSLSLLVLASASPSPPADEGSYIGVNIGTDLSDMPHPTQVVALLKAQEIRHIRLYNADPGLLIALANTGIKVIISIPNDQLLGIGQSNSTAANWVKRNVIAHYPATMITAVSVGSEVLTSLSNAAPVLVSAIKNVHAALLSANLDKLIKVSTPLSTSLILDPFPPSQAFFNRSLNAVIVPLLSFLQSTNSYLMVNVYPYIDYMQSNGVIPLDYALFKPIPPNKEAVDANTLVRYSNAFDAMVDATYFAMAFLNFTNIPVLVTESGWPSKGETNEPDATLDNANTYNSNLIRHVLNKTGTPKRPGIAVSTYIYELYNEDTKAGLSEKNWGLFNANGEPVYVLRLTNSGSVLANDTTNQTYCTAREGADTKMLQAALDWACGPGKIDCSPIKQGETCYEPDNVVAHANYAFDTYYHQTGNNPDACNFNGVASITTTDPSHGTCVFAGSRGNGRNGTSVNITAPSANSTTSSGIRSDLYYSRGIWSILTVMILNVANIL.

Residues 1 to 20 (MASLLHLLLLSLSLLVLASA) form the signal peptide. Asn97 is a glycosylation site (N-linked (GlcNAc...) asparagine). Glu125 acts as the Proton donor in catalysis. N-linked (GlcNAc...) asparagine glycosylation is found at Asn180 and Asn262. Glu272 functions as the Nucleophile in the catalytic mechanism. Residues Asn304, Asn361, and Asn365 are each glycosylated (N-linked (GlcNAc...) asparagine). Cys369 and Cys432 are disulfide-bonded. N-linked (GlcNAc...) asparagine glycans are attached at residues Asn461, Asn466, and Asn473. Ser477 is lipidated: GPI-anchor amidated serine. A propeptide spans 478-505 (SGIRSDLYYSRGIWSILTVMILNVANIL) (removed in mature form).

This sequence belongs to the glycosyl hydrolase 17 family. Post-translationally, contains two additional disulfide bonds.

It is found in the cell membrane. The catalysed reaction is Hydrolysis of (1-&gt;3)-beta-D-glucosidic linkages in (1-&gt;3)-beta-D-glucans.. The chain is Glucan endo-1,3-beta-glucosidase 2 from Arabidopsis thaliana (Mouse-ear cress).